A 292-amino-acid polypeptide reads, in one-letter code: Ribosomal protein L11 methyltransferase (292 aa).

S-adenosyl-L-methionine-binding residues include T138, G159, D181, and N225.

The protein belongs to the methyltransferase superfamily. PrmA family.

The protein resides in the cytoplasm. The catalysed reaction is L-lysyl-[protein] + 3 S-adenosyl-L-methionine = N(6),N(6),N(6)-trimethyl-L-lysyl-[protein] + 3 S-adenosyl-L-homocysteine + 3 H(+). In terms of biological role, methylates ribosomal protein L11. This Leuconostoc citreum (strain KM20) protein is Ribosomal protein L11 methyltransferase.